We begin with the raw amino-acid sequence, 964 residues long: Vitamin B12-dependent ribonucleotide reductase (964 aa).

The disordered stretch occupies residues M1 to G21. Basic residues predominate over residues S12–G21. Substrate is bound by residues S142, A158–C159, G187, N363–E367, and P553–I557. Residues C159 and C376 are joined by a disulfide bond. The active-site Proton acceptor is the N363. Catalysis depends on C365, which acts as the Cysteine radical intermediate. The active-site Proton acceptor is the E367.

Belongs to the ribonucleoside diphosphate reductase class-2 family. Requires adenosylcob(III)alamin as cofactor.

The catalysed reaction is a 2'-deoxyribonucleoside 5'-diphosphate + [thioredoxin]-disulfide + H2O = a ribonucleoside 5'-diphosphate + [thioredoxin]-dithiol. Functionally, catalyzes the reduction of ribonucleotides to deoxyribonucleotides. May function to provide a pool of deoxyribonucleotide precursors for DNA repair during oxygen limitation and/or for immediate growth after restoration of oxygen. The sequence is that of Vitamin B12-dependent ribonucleotide reductase (nrdJ) from Streptomyces avermitilis (strain ATCC 31267 / DSM 46492 / JCM 5070 / NBRC 14893 / NCIMB 12804 / NRRL 8165 / MA-4680).